We begin with the raw amino-acid sequence, 117 residues long: Large ribosomal subunit protein bL20c (117 aa).

The protein belongs to the bacterial ribosomal protein bL20 family.

Its subcellular location is the plastid. It is found in the chloroplast. In terms of biological role, binds directly to 23S ribosomal RNA and is necessary for the in vitro assembly process of the 50S ribosomal subunit. It is not involved in the protein synthesizing functions of that subunit. The protein is Large ribosomal subunit protein bL20c of Populus alba (White poplar).